A 201-amino-acid polypeptide reads, in one-letter code: UPF0301 protein MMAR_0053 (201 aa).

Belongs to the UPF0301 (AlgH) family.

This is UPF0301 protein MMAR_0053 from Mycobacterium marinum (strain ATCC BAA-535 / M).